We begin with the raw amino-acid sequence, 325 residues long: MALADSTRGLPNGGGGGGGSGSSSSSAEPPLFPDIVELNVGGQVYVTRRCTVVSVPDSLLWRMFTQQQPQELARDSKGRFFLDRDGFLFRYILDYLRDLQLVLPDYFPERSRLQREAEYFELPELVRRLGAPQQPGPGPPPSRRGVHKEGSLGDELLPLGYSEPEQQEGASAGAPSPTLELASRSPSGGAAGPLLTPSQSLDGSRRSGYITIGYRGSYTIGRDAQADAKFRRVARITVCGKTSLAKEVFGDTLNESRDPDRPPERYTSRYYLKFNFLEQAFDKLSESGFHMVACSSTGTCAFASSTDQSEDKIWTSYTEYVFCRE.

Residues 1-28 (MALADSTRGLPNGGGGGGGSGSSSSSAE) are disordered. N-acetylalanine is present on Ala2. Residues 11–21 (PNGGGGGGGSG) are compositionally biased toward gly residues. Tyr119 bears the Phosphotyrosine mark. The disordered stretch occupies residues 129–202 (LGAPQQPGPG…PLLTPSQSLD (74 aa)). Phosphoserine is present on residues Ser151, Ser171, and Ser185. Thr196 carries the phosphothreonine modification. Ser200 carries the phosphoserine modification.

As to quaternary structure, interacts as a tetramer with GABBR1 and GABBR2. As to expression, present in a variety of fetal organs, with highest expression levels in the cochlea and brain and, in stark contrast, is detected only at extremely low levels in adult organs, such as brain and lung.

The protein resides in the presynaptic cell membrane. The protein localises to the postsynaptic cell membrane. Auxiliary subunit of GABA-B receptors that determine the pharmacology and kinetics of the receptor response. Increases agonist potency and markedly alter the G-protein signaling of the receptors by accelerating onset and promoting desensitization. The polypeptide is BTB/POZ domain-containing protein KCTD12 (KCTD12) (Homo sapiens (Human)).